The following is a 290-amino-acid chain: ATP synthase gamma chain (290 aa).

It belongs to the ATPase gamma chain family. F-type ATPases have 2 components, CF(1) - the catalytic core - and CF(0) - the membrane proton channel. CF(1) has five subunits: alpha(3), beta(3), gamma(1), delta(1), epsilon(1). CF(0) has three main subunits: a, b and c.

Its subcellular location is the cell membrane. Functionally, produces ATP from ADP in the presence of a proton gradient across the membrane. The gamma chain is believed to be important in regulating ATPase activity and the flow of protons through the CF(0) complex. The chain is ATP synthase gamma chain from Buchnera aphidicola subsp. Schlechtendalia chinensis.